Consider the following 251-residue polypeptide: uncharacterized protein (251 aa).

4 disordered regions span residues 1–93 (MQPG…ASPG), 107–152 (GLRS…SRPQ), 169–188 (PSSILSAASPGAKLPRVSLS), and 224–251 (LQAQNLPSSGPLQARPRPRPHSGLSTPS). The span at 225 to 234 (QAQNLPSSGP) shows a compositional bias: polar residues.

This is an uncharacterized protein from Homo sapiens (Human).